The primary structure comprises 297 residues: 33 kDa chaperonin (297 aa).

2 disulfide bridges follow: C232–C234 and C266–C269.

Belongs to the HSP33 family. Post-translationally, under oxidizing conditions two disulfide bonds are formed involving the reactive cysteines. Under reducing conditions zinc is bound to the reactive cysteines and the protein is inactive.

The protein resides in the cytoplasm. Functionally, redox regulated molecular chaperone. Protects both thermally unfolding and oxidatively damaged proteins from irreversible aggregation. Plays an important role in the bacterial defense system toward oxidative stress. The sequence is that of 33 kDa chaperonin from Pseudomonas aeruginosa (strain LESB58).